Reading from the N-terminus, the 241-residue chain is Probable GTP-binding protein EngB (241 aa).

One can recognise an EngB-type G domain in the interval 56-240; it reads GPVEIAFAGR…RAAIALLLKE (185 aa). Residues 64–71, 91–95, 118–121, 185–188, and 219–221 each bind GTP; these read GRSNVGKS, GRTQE, DMPG, TKID, and TSS. 2 residues coordinate Mg(2+): Ser-71 and Thr-93.

This sequence belongs to the TRAFAC class TrmE-Era-EngA-EngB-Septin-like GTPase superfamily. EngB GTPase family. Mg(2+) is required as a cofactor.

Necessary for normal cell division and for the maintenance of normal septation. The protein is Probable GTP-binding protein EngB of Brucella suis biovar 1 (strain 1330).